Consider the following 804-residue polypeptide: Leucine--tRNA ligase (804 aa).

Positions 40–51 (PYPSGAGLHVGH) match the 'HIGH' region motif. A 'KMSKS' region motif is present at residues 574-578 (KMSKS). Residue lysine 577 participates in ATP binding.

It belongs to the class-I aminoacyl-tRNA synthetase family.

It is found in the cytoplasm. It carries out the reaction tRNA(Leu) + L-leucine + ATP = L-leucyl-tRNA(Leu) + AMP + diphosphate. This chain is Leucine--tRNA ligase, found in Shouchella clausii (strain KSM-K16) (Alkalihalobacillus clausii).